An 847-amino-acid polypeptide reads, in one-letter code: Follistatin-related protein 5 (847 aa).

A signal peptide spans 1–20 (MFKCWSVVLVLGFIFLESEG). The 53-residue stretch at 83 to 135 (GQAECACMDLCKRHYKPVCGSDGEFYENHCEVHRAACLKKQKITIVHNEDCFF) folds into the Kazal-like domain. Disulfide bonds link Cys-89–Cys-119, Cys-93–Cys-112, and Cys-101–Cys-133. 2 consecutive EF-hand domains span residues 175–210 (RKKL…EELG) and 211–246 (KDLF…QVIQ). The Ca(2+) site is built by Asp-188, Asp-190, Asn-192, Glu-199, Asp-226, Asn-228, Asp-230, His-232, and Glu-237. 2 consecutive Ig-like domains span residues 250–337 (PEDQ…IFQV) and 341–426 (PVIR…EDIS). Disulfide bonds link Cys-270/Cys-321 and Cys-362/Cys-413. Asn-318 and Asn-394 each carry an N-linked (GlcNAc...) asparagine glycan.

It is found in the secreted. The sequence is that of Follistatin-related protein 5 (FSTL5) from Homo sapiens (Human).